We begin with the raw amino-acid sequence, 24 residues long: Brevinin-1JDc (24 aa).

Residues Cys-18 and Cys-24 are joined by a disulfide bond.

In terms of tissue distribution, expressed by the skin glands.

It localises to the secreted. Its function is as follows. Has antibacterial activity against E.coli ATCC 25992 (MIC=49 uM), E.coli CIB 84492 (MIC=25 uM), S.aureus ATCC 25923 (MIC=6 uM) and S.aureus CIB 85462 (MIC=3 uM). The sequence is that of Brevinin-1JDc from Odorrana jingdongensis (Jingdong frog).